A 117-amino-acid chain; its full sequence is UPF0342 protein lmo2223 (117 aa).

It belongs to the UPF0342 family.

This is UPF0342 protein lmo2223 from Listeria monocytogenes serovar 1/2a (strain ATCC BAA-679 / EGD-e).